The primary structure comprises 135 residues: S-adenosylmethionine decarboxylase proenzyme (135 aa).

The active-site Schiff-base intermediate with substrate; via pyruvic acid is the S63. S63 carries the post-translational modification Pyruvic acid (Ser); by autocatalysis. H68 functions as the Proton acceptor; for processing activity in the catalytic mechanism. C83 serves as the catalytic Proton donor; for catalytic activity.

This sequence belongs to the prokaryotic AdoMetDC family. Type 1 subfamily. As to quaternary structure, heterotetramer of two alpha and two beta chains arranged as a dimer of alpha/beta heterodimers. Pyruvate serves as cofactor. In terms of processing, is synthesized initially as an inactive proenzyme. Formation of the active enzyme involves a self-maturation process in which the active site pyruvoyl group is generated from an internal serine residue via an autocatalytic post-translational modification. Two non-identical subunits are generated from the proenzyme in this reaction, and the pyruvate is formed at the N-terminus of the alpha chain, which is derived from the carboxyl end of the proenzyme. The post-translation cleavage follows an unusual pathway, termed non-hydrolytic serinolysis, in which the side chain hydroxyl group of the serine supplies its oxygen atom to form the C-terminus of the beta chain, while the remainder of the serine residue undergoes an oxidative deamination to produce ammonia and the pyruvoyl group blocking the N-terminus of the alpha chain.

The enzyme catalyses S-adenosyl-L-methionine + H(+) = S-adenosyl 3-(methylsulfanyl)propylamine + CO2. It participates in amine and polyamine biosynthesis; S-adenosylmethioninamine biosynthesis; S-adenosylmethioninamine from S-adenosyl-L-methionine: step 1/1. Functionally, catalyzes the decarboxylation of S-adenosylmethionine to S-adenosylmethioninamine (dcAdoMet), the propylamine donor required for the synthesis of the polyamines spermine and spermidine from the diamine putrescine. The sequence is that of S-adenosylmethionine decarboxylase proenzyme from Thermodesulfovibrio yellowstonii (strain ATCC 51303 / DSM 11347 / YP87).